Consider the following 316-residue polypeptide: Insulin-like growth factor-binding protein 2 (316 aa).

An N-terminal signal peptide occupies residues 1 to 29 (MLPRLGGTALSLLPLLLLLLGTGGRGARA). Residues 31–126 (VLFRCPPCTP…VLGEGTCEKR (96 aa)) form the IGFBP N-terminal domain. Cystine bridges form between cysteine 35/cysteine 76, cysteine 38/cysteine 78, cysteine 46/cysteine 79, cysteine 68/cysteine 82, cysteine 90/cysteine 103, and cysteine 97/cysteine 123. Residues 189-217 (QHRQMGKGGKHHLGLEEPKKLRPPPARTP) form a disordered region. In terms of domain architecture, Thyroglobulin type-1 spans 215 to 297 (RTPCQQELDQ…APTIRGDPEC (83 aa)). 3 disulfides stabilise this stretch: cysteine 218–cysteine 252, cysteine 263–cysteine 274, and cysteine 276–cysteine 297. Positions 292–294 (RGD) match the Cell attachment site motif.

As to quaternary structure, interacts with IGF1. Interacts with IGF2. Interacts (via RGD motif) with integrin alpha5/ITGA5; this interaction induces cell migration, adhesion or apoptosis according to the context. Interacts with PTPRB; this interaction leads to PTPRB dimerization and inactivation. Post-translationally, cleaved by MMP9 leading to release of free IGF2 from IGFBP2-IGF2 complex, which contributes to enhance the motility and the growth of astrocytes. In terms of processing, O-glycosylated.

It is found in the secreted. Its function is as follows. May have both growth-inhibiting and growth-promoting effects, depending on tissue type; increases IGF-induced DNA synthesis in the uterine epithelium. IGF-binding proteins prolong the half-life of the IGFs and have been shown to either inhibit or stimulate the growth promoting effects of the IGFs on cell culture. They alter the interaction of IGFs with their cell surface receptors. Multifunctional protein that plays a critical role in regulating the availability of IGFs such as IGF1 and IGF2 to their receptors and thereby regulates IGF-mediated cellular processes including proliferation, differentiation, and apoptosis in a cell-type specific manner. Functions coordinately with receptor protein tyrosine phosphatase beta/PTPRB and the IGF1 receptor to regulate IGF1-mediated signaling by stimulating the phosphorylation of PTEN leading to its inactivation and AKT1 activation. Plays a positive role in cell migration via interaction with integrin alpha5/ITGA5 through an RGD motif. Additionally, interaction with ITGA5/ITGB1 enhances the adhesion of endothelial progenitor cells to endothelial cells. Upon mitochondrial damage, facilitates apoptosis with ITGA5 of podocytes, and then activates the phosphorylation of focal adhesion kinase (FAK)-mediated mitochondrial injury. The polypeptide is Insulin-like growth factor-binding protein 2 (IGFBP2) (Sus scrofa (Pig)).